Consider the following 721-residue polypeptide: DNA ligase (721 aa).

Residues 39–43 (DAEYD), 89–90 (SL), and Glu123 contribute to the NAD(+) site. The N6-AMP-lysine intermediate role is filled by Lys125. 4 residues coordinate NAD(+): Arg146, Glu186, Lys302, and Lys326. The Zn(2+) site is built by Cys418, Cys421, Cys436, and Cys442. The tract at residues 556 to 588 (QASSAAREGEPANADGAYDPATVTPDSDTAGAE) is disordered. The BRCT domain maps to 641–721 (TKDSAVAGKT…AWAEIVRQAG (81 aa)).

The protein belongs to the NAD-dependent DNA ligase family. LigA subfamily. It depends on Mg(2+) as a cofactor. The cofactor is Mn(2+).

It carries out the reaction NAD(+) + (deoxyribonucleotide)n-3'-hydroxyl + 5'-phospho-(deoxyribonucleotide)m = (deoxyribonucleotide)n+m + AMP + beta-nicotinamide D-nucleotide.. DNA ligase that catalyzes the formation of phosphodiester linkages between 5'-phosphoryl and 3'-hydroxyl groups in double-stranded DNA using NAD as a coenzyme and as the energy source for the reaction. It is essential for DNA replication and repair of damaged DNA. In Novosphingobium aromaticivorans (strain ATCC 700278 / DSM 12444 / CCUG 56034 / CIP 105152 / NBRC 16084 / F199), this protein is DNA ligase.